The primary structure comprises 345 residues: Myb/SANT-like DNA-binding domain-containing protein 4 (345 aa).

Residues 4–77 form the Myb-like domain; sequence LKRKRKSNFS…EVKRRYLDWR (74 aa). A Glycyl lysine isopeptide (Lys-Gly) (interchain with G-Cter in SUMO2) cross-link involves residue Lys9. Position 106 is a phosphoserine (Ser106). Glycyl lysine isopeptide (Lys-Gly) (interchain with G-Cter in SUMO2) cross-links involve residues Lys114 and Lys142. The interval 141–175 is disordered; that stretch reads VKVEEEERDPQSPEFEIEEEEEMLSSVIPDSRREN. At Thr188 the chain carries Phosphothreonine. A coiled-coil region spans residues 202-344; sequence HLLMNIEKQK…RLRIQKEGHL (143 aa). Glycyl lysine isopeptide (Lys-Gly) (interchain with G-Cter in SUMO2) cross-links involve residues Lys237, Lys254, and Lys273.

This Rattus norvegicus (Rat) protein is Myb/SANT-like DNA-binding domain-containing protein 4 (Msantd4).